Reading from the N-terminus, the 80-residue chain is Cytochrome c oxidase subunit 7B, mitochondrial (80 aa).

Residues 1-24 constitute a mitochondrion transit peptide; sequence MFPLVKNALNRLQVRSIQQTMARQ. Over 25-32 the chain is Mitochondrial matrix; it reads SHQKRTPD. The chain crosses the membrane as a helical span at residues 33–59; it reads FHDKYGNAVLASGATFCIVTWTYVATQ. At 60–80 the chain is on the mitochondrial intermembrane side; that stretch reads VGIEWNLSPVGRVTPKEWRNQ.

Belongs to the cytochrome c oxidase VIIb family. As to quaternary structure, component of the cytochrome c oxidase (complex IV, CIV), a multisubunit enzyme composed of 14 subunits. The complex is composed of a catalytic core of 3 subunits MT-CO1, MT-CO2 and MT-CO3, encoded in the mitochondrial DNA, and 11 supernumerary subunits COX4I, COX5A, COX5B, COX6A, COX6B, COX6C, COX7A, COX7B, COX7C, COX8 and NDUFA4, which are encoded in the nuclear genome. The complex exists as a monomer or a dimer and forms supercomplexes (SCs) in the inner mitochondrial membrane with NADH-ubiquinone oxidoreductase (complex I, CI) and ubiquinol-cytochrome c oxidoreductase (cytochrome b-c1 complex, complex III, CIII), resulting in different assemblies (supercomplex SCI(1)III(2)IV(1) and megacomplex MCI(2)III(2)IV(2)).

The protein resides in the mitochondrion inner membrane. The protein operates within energy metabolism; oxidative phosphorylation. Its function is as follows. Component of the cytochrome c oxidase, the last enzyme in the mitochondrial electron transport chain which drives oxidative phosphorylation. The respiratory chain contains 3 multisubunit complexes succinate dehydrogenase (complex II, CII), ubiquinol-cytochrome c oxidoreductase (cytochrome b-c1 complex, complex III, CIII) and cytochrome c oxidase (complex IV, CIV), that cooperate to transfer electrons derived from NADH and succinate to molecular oxygen, creating an electrochemical gradient over the inner membrane that drives transmembrane transport and the ATP synthase. Cytochrome c oxidase is the component of the respiratory chain that catalyzes the reduction of oxygen to water. Electrons originating from reduced cytochrome c in the intermembrane space (IMS) are transferred via the dinuclear copper A center (CU(A)) of subunit 2 and heme A of subunit 1 to the active site in subunit 1, a binuclear center (BNC) formed by heme A3 and copper B (CU(B)). The BNC reduces molecular oxygen to 2 water molecules using 4 electrons from cytochrome c in the IMS and 4 protons from the mitochondrial matrix. Plays a role in proper central nervous system (CNS) development in vertebrates. This is Cytochrome c oxidase subunit 7B, mitochondrial (COX7B) from Pongo abelii (Sumatran orangutan).